A 296-amino-acid polypeptide reads, in one-letter code: Pantothenate synthetase (296 aa).

30–37 (MGNLHEGH) is an ATP binding site. His-37 (proton donor) is an active-site residue. Gln-61 is a binding site for (R)-pantoate. Gln-61 is a beta-alanine binding site. 149–152 (GEKD) is an ATP binding site. Gln-155 provides a ligand contact to (R)-pantoate. ATP is bound by residues Val-178 and 186-189 (MSSR).

It belongs to the pantothenate synthetase family. Homodimer.

The protein resides in the cytoplasm. It carries out the reaction (R)-pantoate + beta-alanine + ATP = (R)-pantothenate + AMP + diphosphate + H(+). It functions in the pathway cofactor biosynthesis; (R)-pantothenate biosynthesis; (R)-pantothenate from (R)-pantoate and beta-alanine: step 1/1. Its function is as follows. Catalyzes the condensation of pantoate with beta-alanine in an ATP-dependent reaction via a pantoyl-adenylate intermediate. This is Pantothenate synthetase from Vibrio atlanticus (strain LGP32) (Vibrio splendidus (strain Mel32)).